Reading from the N-terminus, the 563-residue chain is Inclusion membrane protein M (563 aa).

The Cytoplasmic portion of the chain corresponds to 1 to 36 (MVYFRAHQPRHTPKTFPLEVHHSFSDKHPQIAKAMR). The chain crosses the membrane as a helical span at residues 37–57 (ITGIALAALSLLAVVACVIAV). Residue Ser58 is a topological domain, vacuolar. The helical transmembrane segment at 59-79 (AGGAAIPLAVISGIAVMSGLL) threads the bilayer. Topologically, residues 80–252 (SAATIICSAK…VLKVALSLGV (173 aa)) are cytoplasmic. A helical transmembrane segment spans residues 253–273 (LAGVAALIIFLPPSLPFIAVI). Gly274 is a topological domain (vacuolar). The helical transmembrane segment at 275-295 (VSSLALGMASFLMIRGIKYLL) threads the bilayer. At 296–563 (EHSPLNRKQL…QLAQYLLDNH (268 aa)) the chain is on the cytoplasmic side.

It belongs to the chlamydial CPn_0065/CT_288/TC_0561 family. As to quaternary structure, interacts with host CCDC146. In host cells infected with C.trachomatis incM, CCDC146 is recruited to the periphery of the pathogen-containing vacuole but recruitment is not dependent on incM.

The protein resides in the host vacuole. The protein localises to the host pathogen-containing vacuole. It is found in the host pathogen-containing vacuole membrane. It localises to the host pathogen-containing vacuole lumen. Its subcellular location is the secreted. Interferes with host cell cytokinesis, centrosome positioning and Golgi distribution, and contributes to the morphology and stability of the pathogen-containing vacuole. May exert its effects by acting directly or indirectly on host microtubules. The polypeptide is Inclusion membrane protein M (Chlamydia trachomatis serovar D (strain ATCC VR-885 / DSM 19411 / UW-3/Cx)).